The sequence spans 211 residues: Large ribosomal subunit protein uL4 (211 aa).

The span at 41 to 52 shows a compositional bias: polar residues; it reads QTNARQGTASTK. Positions 41 to 78 are disordered; the sequence is QTNARQGTASTKTRAEVRGGGRKPWRQKGTGRARAGSI. Over residues 60–71 the composition is skewed to basic residues; the sequence is GGRKPWRQKGTG.

The protein belongs to the universal ribosomal protein uL4 family. As to quaternary structure, part of the 50S ribosomal subunit.

Functionally, one of the primary rRNA binding proteins, this protein initially binds near the 5'-end of the 23S rRNA. It is important during the early stages of 50S assembly. It makes multiple contacts with different domains of the 23S rRNA in the assembled 50S subunit and ribosome. Its function is as follows. Forms part of the polypeptide exit tunnel. The protein is Large ribosomal subunit protein uL4 of Rippkaea orientalis (strain PCC 8801 / RF-1) (Cyanothece sp. (strain PCC 8801)).